Consider the following 424-residue polypeptide: GTPase HflX (424 aa).

In terms of domain architecture, Hflx-type G spans 194–364 (YTVALTGYTG…AVVEMLPEKV (171 aa)). Residues 200–207 (GYTGAGKT), 225–229 (FATLS), 246–249 (DTIG), 314–317 (NKID), and 342–344 (SAA) contribute to the GTP site. Mg(2+)-binding residues include threonine 207 and threonine 227.

The protein belongs to the TRAFAC class OBG-HflX-like GTPase superfamily. HflX GTPase family. As to quaternary structure, monomer. Associates with the 50S ribosomal subunit. Mg(2+) serves as cofactor.

The protein resides in the cytoplasm. Its function is as follows. GTPase that associates with the 50S ribosomal subunit and may have a role during protein synthesis or ribosome biogenesis. This chain is GTPase HflX, found in Thermofilum pendens (strain DSM 2475 / Hrk 5).